The following is a 246-amino-acid chain: 3-deoxy-manno-octulosonate cytidylyltransferase (246 aa).

The protein belongs to the KdsB family.

It is found in the cytoplasm. The enzyme catalyses 3-deoxy-alpha-D-manno-oct-2-ulosonate + CTP = CMP-3-deoxy-beta-D-manno-octulosonate + diphosphate. The protein operates within nucleotide-sugar biosynthesis; CMP-3-deoxy-D-manno-octulosonate biosynthesis; CMP-3-deoxy-D-manno-octulosonate from 3-deoxy-D-manno-octulosonate and CTP: step 1/1. It participates in bacterial outer membrane biogenesis; lipopolysaccharide biosynthesis. Functionally, activates KDO (a required 8-carbon sugar) for incorporation into bacterial lipopolysaccharide in Gram-negative bacteria. In Rickettsia akari (strain Hartford), this protein is 3-deoxy-manno-octulosonate cytidylyltransferase.